Here is a 276-residue protein sequence, read N- to C-terminus: 2-dehydro-3-deoxyphosphooctonate aldolase (276 aa).

It belongs to the KdsA family.

Its subcellular location is the cytoplasm. The catalysed reaction is D-arabinose 5-phosphate + phosphoenolpyruvate + H2O = 3-deoxy-alpha-D-manno-2-octulosonate-8-phosphate + phosphate. It participates in carbohydrate biosynthesis; 3-deoxy-D-manno-octulosonate biosynthesis; 3-deoxy-D-manno-octulosonate from D-ribulose 5-phosphate: step 2/3. The protein operates within bacterial outer membrane biogenesis; lipopolysaccharide biosynthesis. The chain is 2-dehydro-3-deoxyphosphooctonate aldolase from Helicobacter pylori (strain Shi470).